We begin with the raw amino-acid sequence, 614 residues long: Dihydroxy-acid dehydratase (614 aa).

Aspartate 81 serves as a coordination point for Mg(2+). Residue cysteine 122 participates in [2Fe-2S] cluster binding. 2 residues coordinate Mg(2+): aspartate 123 and lysine 124. N6-carboxylysine is present on lysine 124. Residue cysteine 193 coordinates [2Fe-2S] cluster. Residue glutamate 489 participates in Mg(2+) binding. Catalysis depends on serine 515, which acts as the Proton acceptor.

This sequence belongs to the IlvD/Edd family. Homodimer. Requires [2Fe-2S] cluster as cofactor. It depends on Mg(2+) as a cofactor.

It catalyses the reaction (2R)-2,3-dihydroxy-3-methylbutanoate = 3-methyl-2-oxobutanoate + H2O. The catalysed reaction is (2R,3R)-2,3-dihydroxy-3-methylpentanoate = (S)-3-methyl-2-oxopentanoate + H2O. It participates in amino-acid biosynthesis; L-isoleucine biosynthesis; L-isoleucine from 2-oxobutanoate: step 3/4. The protein operates within amino-acid biosynthesis; L-valine biosynthesis; L-valine from pyruvate: step 3/4. Functions in the biosynthesis of branched-chain amino acids. Catalyzes the dehydration of (2R,3R)-2,3-dihydroxy-3-methylpentanoate (2,3-dihydroxy-3-methylvalerate) into 2-oxo-3-methylpentanoate (2-oxo-3-methylvalerate) and of (2R)-2,3-dihydroxy-3-methylbutanoate (2,3-dihydroxyisovalerate) into 2-oxo-3-methylbutanoate (2-oxoisovalerate), the penultimate precursor to L-isoleucine and L-valine, respectively. The sequence is that of Dihydroxy-acid dehydratase from Saccharophagus degradans (strain 2-40 / ATCC 43961 / DSM 17024).